The sequence spans 574 residues: Glycine--tRNA ligase (574 aa).

Substrate-binding residues include Arg-96 and Glu-162. ATP contacts are provided by residues 194–196 (RNE), 204–209 (IRLREF), 327–328 (EC), and 450–453 (GIDR). 209 to 213 (FTQAE) contributes to the substrate binding site. Residue 446 to 450 (EPSYG) coordinates substrate.

The protein belongs to the class-II aminoacyl-tRNA synthetase family.

It is found in the cytoplasm. The catalysed reaction is tRNA(Gly) + glycine + ATP = glycyl-tRNA(Gly) + AMP + diphosphate. In terms of biological role, catalyzes the attachment of glycine to tRNA(Gly). The polypeptide is Glycine--tRNA ligase (Methanococcus maripaludis (strain DSM 14266 / JCM 13030 / NBRC 101832 / S2 / LL)).